We begin with the raw amino-acid sequence, 427 residues long: Sialic acid TRAP transporter large permease protein SiaM (427 aa).

12 consecutive transmembrane segments (helical) span residues L11 to I31, F52 to I72, S82 to F102, A140 to V160, I165 to V185, A214 to T234, A246 to L266, V270 to V290, D301 to L321, L322 to V342, V348 to L368, and V394 to F414.

The protein belongs to the TRAP transporter large permease family. As to quaternary structure, the complex comprises the extracytoplasmic solute receptor protein SiaP, and the two transmembrane proteins SiaQ and SiaM. SiaQ and SiaM form a tight 1:1 complex.

The protein resides in the cell inner membrane. Part of the tripartite ATP-independent periplasmic (TRAP) transport system SiaPQM that catalyzes unidirectional Na(+)-dependent sialic acid uptake. This Vibrio cholerae serotype O1 (strain ATCC 39315 / El Tor Inaba N16961) protein is Sialic acid TRAP transporter large permease protein SiaM.